A 294-amino-acid polypeptide reads, in one-letter code: tRNA pseudouridine synthase B (294 aa).

Aspartate 38 serves as the catalytic Nucleophile.

This sequence belongs to the pseudouridine synthase TruB family. Type 1 subfamily.

The enzyme catalyses uridine(55) in tRNA = pseudouridine(55) in tRNA. Responsible for synthesis of pseudouridine from uracil-55 in the psi GC loop of transfer RNAs. This is tRNA pseudouridine synthase B from Clostridium perfringens (strain SM101 / Type A).